A 390-amino-acid chain; its full sequence is Sister chromatid cohesion protein DCC1 (390 aa).

Belongs to the DCC1 family. In terms of assembly, component of the ctf18-RFC complex which consists of ctf18, ctf8, dscc1 and the RFC complex.

Its subcellular location is the nucleus. Its function is as follows. Loads pcna onto primed templates regulating velocity, spacing and restart activity of replication forks. May couple DNA replication to sister chromatid cohesion. This chain is Sister chromatid cohesion protein DCC1 (dscc1), found in Xenopus laevis (African clawed frog).